Consider the following 1208-residue polypeptide: MYIKTITIQGFKSYRDQVAVDPFSPGHNVVVGRNGSGKSNFFSAIRFVLSDQYTKLSREERQRLLHEGTSTSTTLSAYVEIVFDNSDGRFPTGRQELVLRRTIGLKKDEYSLDRKSASKSEVDQLLESAGFSKANPYYIVPQGRITHLTNMNDRERLRLLKDVAGTEVYEQKRAESTRIMEETDGKRDKILELLTTIEDRLRELEEEKEELKEYQEKDRERRCLEYALHQRELEDVTNALDEIEAERRQDIHDSNEKRKEFNDREDEIQRYEEALTAAKHSLSTTQASLRQYETERADLVRNKTELECVIADFETAGQVGEHRRAELAEELEVMQQKVDEATARLEDLVQEAEQRIGEEKAAREALEPTQSKLSVLFAKQGRAQQFATQAARDEYLRDEIKALEEHEKNQGRRVEILQNEVAGAKEQLAQLSAKSEQQAQGENDRRENLKKMNEEIAQLQTNIAGMHEQKKELWREEGKLTQIEVNAKSEMEAAERSLMGMMNKDTSNGLRAVRQIAKRLNLDGVFGPLYDLFEVSDKYKTAVEVTAGNSLFHVVVDNDETASKLLDVMNREKSGRVTFMPLNRLKSHSVNYPKANDAIPMIQKLQFDREYVMAFEQVFGRTIICEDLQTAAHYTRSHGLNAVTIEGDRVDRKGALTGGYHDVRRSRLDTVKAAKKWRTAYETDHARHIEVKAALQNLEQEVTRAMGQVQALEAKKRHISDGGEGLFKLLTLPARDLDQARDRVTRLESSLEEAEGASRDAKAKRASYEEELRTPMRQNLTDEELRELETLTQSVESQKKLLFDATQSRAKAVGERNRLEIELSENLRRKRQELRDKLDRLEGEAGNGELQSGEVELRRNELRNLVRDIEQLEEKVSESEGRVDELNSEISKISENLERVQTQQMENTRAIMRVQKNAERYLTKRQTLINRREECNNAIRDLGALPEEAFSKYTDQRSDKIIKRLHKVNDGLKKFAHVNKKAFEQYNNFTKQRDELMDRRDELDQSAVKIEELIETLDQRKDEAIERTFKQVSKYFEEVFETLVPLGKGELIMQKKTDGFIEEESEESLEQGREKSDIDSYTGVSIRVSFNSKHDEGQRIQQLSGGQKSLVALALVFAIQKCDPAPFYLFDEIDANLDAQYRTAVATMIHTLSTSAQFITTTFKSEMLAQADKFYGVFFDKQKVSTIKVIEKEEASDFVETAAQVGQL.

Coiled coils occupy residues 187–362 and 400–469; these read RDKI…EKAA and IKAL…MHEQ. The SMC hinge domain occupies 523 to 633; sequence DGVFGPLYDL…ICEDLQTAAH (111 aa). 2 coiled-coil regions span residues 688–771 and 817–903; these read HIEV…YEEE and NRLE…VQTQ. A disordered region spans residues 748 to 773; that stretch reads ESSLEEAEGASRDAKAKRASYEEELR. Residues 756 to 773 are compositionally biased toward basic and acidic residues; it reads GASRDAKAKRASYEEELR.

The protein belongs to the SMC family. SMC3 subfamily. In terms of assembly, component of cohesin complexes.

It is found in the nucleus. Its function is as follows. Central component of cohesin, a complex required for chromosome cohesion during the cell cycle. The cohesin complex may form a large proteinaceous ring within which sister chromatids can be trapped. At anaphase, the complex is cleaved and dissociates from chromatin, allowing sister chromatids to segregate. Cohesion is coupled to DNA replication and is involved in DNA repair. The cohesin complex also plays an important role in spindle pole assembly during mitosis and in chromosomes movement. Is unrelated to urease function in C.neoformans. This chain is Urease accessory protein 2, found in Cryptococcus neoformans var. grubii serotype A (strain H99 / ATCC 208821 / CBS 10515 / FGSC 9487) (Filobasidiella neoformans var. grubii).